A 204-amino-acid polypeptide reads, in one-letter code: UPF0056 membrane protein TC_0241 (204 aa).

A run of 6 helical transmembrane segments spans residues 8–28 (LTLL…FVAL), 46–66 (IFAL…FRLL), 68–88 (VSLP…AINM), 107–127 (IFYP…STLG), 138–158 (LVLG…FFSS), and 176–196 (FGIS…STAF).

The protein belongs to the UPF0056 (MarC) family.

It localises to the cell membrane. In Chlamydia muridarum (strain MoPn / Nigg), this protein is UPF0056 membrane protein TC_0241.